We begin with the raw amino-acid sequence, 343 residues long: Cell invasion protein SipD (343 aa).

The tract at residues 1 to 26 (MLNIQNYSASPHPGIVAERPQTPSAS) is disordered. Residues 295-322 (KAQEENMKTTLQTLTQKYSNANSLYDNL) are a coiled coil.

Belongs to the invasin protein D family.

The protein resides in the secreted. Functionally, required for translocation of effector proteins via the type III secretion system SPI-1, which is essential for an efficient bacterial internalization. Probably acts by modulating the secretion of SipA, SipB, and SipC. The chain is Cell invasion protein SipD (sipD) from Salmonella typhimurium (strain LT2 / SGSC1412 / ATCC 700720).